The primary structure comprises 335 residues: Glyceraldehyde-3-phosphate dehydrogenase (335 aa).

NAD(+)-binding positions include 15-16 (RI) and Asp37. D-glyceraldehyde 3-phosphate is bound by residues 155-157 (SCT), Thr186, Arg201, 214-215 (TG), and Arg237. Cys156 functions as the Nucleophile in the catalytic mechanism. Residues Gln301 and Asn318 each contribute to the NAD(+) site.

The protein belongs to the glyceraldehyde-3-phosphate dehydrogenase family. In terms of assembly, homotetramer.

The protein localises to the cytoplasm. It carries out the reaction D-glyceraldehyde 3-phosphate + phosphate + NADP(+) = (2R)-3-phospho-glyceroyl phosphate + NADPH + H(+). The enzyme catalyses D-glyceraldehyde 3-phosphate + phosphate + NAD(+) = (2R)-3-phospho-glyceroyl phosphate + NADH + H(+). It participates in carbohydrate degradation; glycolysis; pyruvate from D-glyceraldehyde 3-phosphate: step 1/5. This Haloarcula vallismortis (Halobacterium vallismortis) protein is Glyceraldehyde-3-phosphate dehydrogenase (gap).